Consider the following 639-residue polypeptide: 3D-(3,5/4)-trihydroxycyclohexane-1,2-dione hydrolase (639 aa).

Position 62 (E62) interacts with thiamine diphosphate. Residues 438-518 (SLPGDLQRMW…INILLFDNCG (81 aa)) are thiamine pyrophosphate binding. Mg(2+) contacts are provided by D489 and N516.

Belongs to the TPP enzyme family. Mg(2+) is required as a cofactor. Requires thiamine diphosphate as cofactor.

The catalysed reaction is 3D-3,5/4-trihydroxycyclohexane-1,2-dione + H2O = 5-deoxy-D-glucuronate + H(+). Its pathway is polyol metabolism; myo-inositol degradation into acetyl-CoA; acetyl-CoA from myo-inositol: step 3/7. In terms of biological role, involved in the cleavage of the C1-C2 bond of 3D-(3,5/4)-trihydroxycyclohexane-1,2-dione (THcHDO) to yield 5-deoxy-glucuronate (5DG). This Clostridium perfringens (strain 13 / Type A) protein is 3D-(3,5/4)-trihydroxycyclohexane-1,2-dione hydrolase.